A 335-amino-acid polypeptide reads, in one-letter code: MSQILKRYDLDKLAVATIASHTALQILRGAKKYGFRTIAIAKNEDIAQFYKQFFFIDEVWTGDFSNFRKTAERLVAENALLIPHGSYVEYVGWRQALEAPVPTLGCRELLRWEADQYKKMALLEEAGIPIPRVYRSPTEVDGPVIVKFFGAKGGRGYFVAKGREELEARLKALGEEYIIQEYLFGVPAYYHYFASPVYSRIEVFGADIRYESNVDGRTFGWAEPTFVVVGNLSLVLRESLLPIIHKYGVQFAKAVEKRVGCRLAGPYCLESIIKDDMSIVVFEFSGRIVAGTNIYMGYGSPYSVLYFDKPMDMGERIAHEIREAAKAGKLDQLFT.

Residues H21 and S86 each coordinate 5-amino-1-(5-phospho-beta-D-ribosyl)imidazole-4-carboxamide. One can recognise an ATP-grasp domain in the interval 107 to 315 (RELLRWEADQ…YFDKPMDMGE (209 aa)). Residues 137-189 (PTEV…VPAY) and E211 each bind ATP. N231 serves as a coordination point for 5-amino-1-(5-phospho-beta-D-ribosyl)imidazole-4-carboxamide. Mg(2+) is bound by residues E270 and E283.

This sequence belongs to the phosphohexose mutase family. Mg(2+) is required as a cofactor. It depends on Mn(2+) as a cofactor.

The catalysed reaction is 5-amino-1-(5-phospho-beta-D-ribosyl)imidazole-4-carboxamide + formate + ATP = 5-formamido-1-(5-phospho-D-ribosyl)imidazole-4-carboxamide + ADP + phosphate. Its pathway is purine metabolism; IMP biosynthesis via de novo pathway; 5-formamido-1-(5-phospho-D-ribosyl)imidazole-4-carboxamide from 5-amino-1-(5-phospho-D-ribosyl)imidazole-4-carboxamide (formate route): step 1/1. Catalyzes the ATP- and formate-dependent formylation of 5-aminoimidazole-4-carboxamide-1-beta-d-ribofuranosyl 5'-monophosphate (AICAR) to 5-formaminoimidazole-4-carboxamide-1-beta-d-ribofuranosyl 5'-monophosphate (FAICAR) in the absence of folates. The chain is 5-formaminoimidazole-4-carboxamide-1-(beta)-D-ribofuranosyl 5'-monophosphate synthetase from Pyrobaculum arsenaticum (strain DSM 13514 / JCM 11321 / PZ6).